Here is a 253-residue protein sequence, read N- to C-terminus: Ubiquinone biosynthesis O-methyltransferase (253 aa).

S-adenosyl-L-methionine is bound by residues Arg45, Gly76, Asp97, and Met140.

The protein belongs to the methyltransferase superfamily. UbiG/COQ3 family.

It catalyses the reaction a 3-demethylubiquinol + S-adenosyl-L-methionine = a ubiquinol + S-adenosyl-L-homocysteine + H(+). It carries out the reaction a 3-(all-trans-polyprenyl)benzene-1,2-diol + S-adenosyl-L-methionine = a 2-methoxy-6-(all-trans-polyprenyl)phenol + S-adenosyl-L-homocysteine + H(+). It functions in the pathway cofactor biosynthesis; ubiquinone biosynthesis. In terms of biological role, O-methyltransferase that catalyzes the 2 O-methylation steps in the ubiquinone biosynthetic pathway. This chain is Ubiquinone biosynthesis O-methyltransferase, found in Parvibaculum lavamentivorans (strain DS-1 / DSM 13023 / NCIMB 13966).